Consider the following 143-residue polypeptide: Snake venom vascular endothelial growth factor toxin (143 aa).

An N-terminal signal peptide occupies residues 1–24 (MAAYLLAVAILFCIQGWPSATVQG). Glutamine 25 carries the post-translational modification Pyrrolidone carboxylic acid. Cystine bridges form between cysteine 38/cysteine 80, cysteine 69/cysteine 115, and cysteine 73/cysteine 117. A disordered region spans residues 115–143 (CECRPRSPGDVNNGRNPEEGEPRARFPFV). A compositionally biased stretch (basic and acidic residues) spans 130–143 (NPEEGEPRARFPFV).

This sequence belongs to the PDGF/VEGF growth factor family. Snake venom VEGF subfamily. As to quaternary structure, homodimer; disulfide-linked. Interacts with VEGF receptor-2 (KDR). Post-translationally, the N-terminus is blocked for N-terminal sequencing, suggesting a Pyrrolidone carboxylic acid at Gln-25. As to expression, expressed by the venom gland.

It localises to the secreted. Snake venom VEGFs that may contribute to venom dispersion and prey subjugation by inducing vascular permeability and hypotension. This protein induces an increase in capillary permeability when intradermally injected into mice. Also provokes a drastic hypotensive effect after intravenous injection. The hypotension is mediated by nitric oxide (NO), which is produced by VEGF-activated endothelium NO synthase. Also induces angiogenesis in vitro. Unlike other crotalid VEGFs, this protein interacts with VEGF receptor-2 (KDR) with a high affinity (Kd=413 pM), whereas no interaction is detected with VEGF receptor-1 (FLT1). This Protobothrops jerdonii (Jerdon's pitviper) protein is Snake venom vascular endothelial growth factor toxin.